The chain runs to 147 residues: uncharacterized protein (147 aa).

4Fe-4S ferredoxin-type domains are found at residues 80 to 109 (WYPKIDYNRCKNCEKCISFCPRGVYDAENG) and 110 to 141 (KVVVKYPYSCIVNCNACSIMCCENNAIIFPDE). Residues Cys-89, Cys-92, Cys-95, Cys-99, Cys-119, Cys-123, Cys-126, and Cys-130 each coordinate [4Fe-4S] cluster.

[4Fe-4S] cluster serves as cofactor.

This is an uncharacterized protein from Methanocaldococcus jannaschii (strain ATCC 43067 / DSM 2661 / JAL-1 / JCM 10045 / NBRC 100440) (Methanococcus jannaschii).